A 478-amino-acid polypeptide reads, in one-letter code: PTS system mannitol-specific EIICB component (478 aa).

Residues 1-29 (MQQQEQQQGGMKVKVQRFGSYLSGMIMPN) are Cytoplasmic-facing. A PTS EIIC type-2 domain is found at 18–347 (FGSYLSGMIM…VILKSSKASE (330 aa)). Residues 30–51 (IGAFIAWGIITALFIPAGWFPN) form a helical membrane-spanning segment. Topologically, residues 52–55 (EQLN) are extracellular. The helical transmembrane segment at 56–76 (TLVSPMITYLLPLLIAYTGGK) threads the bilayer. Over 77–139 (MIYDHRGGVV…QGFEMLINNF (63 aa)) the chain is Cytoplasmic. The chain crosses the membrane as a helical span at residues 140–161 (TAGIVGAALTILAFYAIGPVVL). Residues 162–170 (TLNKLLAAG) lie on the Extracellular side of the membrane. Residues 171 to 191 (VEVIVHANLLPVASVFVEPAK) form a helical membrane-spanning segment. The Cytoplasmic segment spans residues 192–278 (VLFLNNAINH…ILMKPALILA (87 aa)). Residues 279-298 (AIAGGASGLLTFTIFNAGLV) form a helical membrane-spanning segment. At 299 to 318 (AAASPGSIIALMAMTPRGGY) the chain is on the extracellular side. The chain crosses the membrane as a helical span at residues 319–340 (FGVLAGVLVAAAVSFIVSAVIL). Topologically, residues 341–478 (KSSKASEEDL…YDELIEKLKK (138 aa)) are cytoplasmic. The PTS EIIB type-2 domain maps to 390 to 478 (NKIIFACDAG…YDELIEKLKK (89 aa)). The active-site Phosphocysteine intermediate; for EIIB activity is the cysteine 396. The residue at position 396 (cysteine 396) is a Phosphocysteine; by EIIA.

As to quaternary structure, homodimer.

It localises to the cell membrane. The enzyme catalyses D-mannitol(out) + N(pros)-phospho-L-histidyl-[protein] = D-mannitol 1-phosphate(in) + L-histidyl-[protein]. In terms of biological role, the phosphoenolpyruvate-dependent sugar phosphotransferase system (sugar PTS), a major carbohydrate active transport system, catalyzes the phosphorylation of incoming sugar substrates concomitantly with their translocation across the cell membrane. The enzyme II CmtAB PTS system is involved in D-mannitol transport. The protein is PTS system mannitol-specific EIICB component of Bacillus subtilis (strain 168).